The following is a 508-amino-acid chain: MPPKRNEKYKLPIPFPEGKVLDDMEGNQWVLGKKIGSGGFGLIYLAFPTNKPEKDARHVVKVEYQENGPLFSELKFYQRVAKKDCIKKWIERKQLDYLGIPLFYGSGLTEFKGRSYRFMVMERLGIDLQKISGQNGTFKKSTVLQLGIRMLDVLEYIHENEYVHGDIKAANLLLGYKNPDQVYLADYGLSYRYCPNGNHKQYQENPRKGHNGTIEFTSLDAHKGVALSRRSDVEILGYCMLRWLCGKLPWEQNLKDPVAVQTAKTNLLDELPQSVLKWAPSGSSCCEIAQFLVCAHSLAYDEKPNYQALKKILNPHGIPLGPLDFSTKGQSINVHTPNSQKVDSQKAATKQVNKAHNRLIEKKVHSERSAESCATWKVQKEEKLIGLMNNEAAQESTRRRQKYQESQEPLNEVNSFPQKISYTQFPNSFYEPHQDFTSPDIFKKSRSPSWYKYTSTVSTGITDLESSTGLWPTISQFTLSEETNADVYYYRIIIPVLLMLVFLALFFL.

Residues 29–319 enclose the Protein kinase domain; sequence WVLGKKIGSG…KKILNPHGIP (291 aa). Residues 35 to 43 and Lys61 each bind ATP; that span reads IGSGGFGLI. Asp166 functions as the Proton acceptor in the catalytic mechanism. Thr336 is subject to Phosphothreonine. The interval 397–508 is interaction with MAP3K7; sequence TRRRQKYQES…MLVFLALFFL (112 aa). At Ser406 the chain carries Phosphoserine. Residues 487–507 form a helical; Anchor for type IV membrane protein membrane-spanning segment; sequence VYYYRIIIPVLLMLVFLALFF.

Belongs to the protein kinase superfamily. CK1 Ser/Thr protein kinase family. VRK subfamily. In terms of assembly, isoform 1 interacts with MAP3K7, MAP2K7, MAP2K1 and KSR1. Isoform 1 and isoform 2 interact with RAN and MAPK8IP1. As to quaternary structure, (Microbial infection) Isoform 1 interacts with Epstein-Barr virus BHRF1; this interaction is involved in protecting cells from apoptosis. (Microbial infection) Isoform 1 interacts with vaccinia protein B12. In terms of processing, autophosphorylated. Isoform 1 and isoform 2 are expressed in various tumor cell lines. Expression of isoform 1 inversely correlates with ERBB2 in breast carcinomas (at protein level). Widely expressed. Highly expressed in fetal liver, skeletal muscle, pancreas, heart, peripheral blood leukocytes and testis.

It is found in the cytoplasm. Its subcellular location is the endoplasmic reticulum membrane. It localises to the mitochondrion membrane. The protein localises to the nucleus envelope. The protein resides in the nucleus. It carries out the reaction L-seryl-[protein] + ATP = O-phospho-L-seryl-[protein] + ADP + H(+). The enzyme catalyses L-threonyl-[protein] + ATP = O-phospho-L-threonyl-[protein] + ADP + H(+). With respect to regulation, RAN inhibits its autophosphorylation and its ability to phosphorylate histone H3. In terms of biological role, serine/threonine kinase that regulates several signal transduction pathways. Isoform 1 modulates the stress response to hypoxia and cytokines, such as interleukin-1 beta (IL1B) and this is dependent on its interaction with MAPK8IP1, which assembles mitogen-activated protein kinase (MAPK) complexes. Inhibition of signal transmission mediated by the assembly of MAPK8IP1-MAPK complexes reduces JNK phosphorylation and JUN-dependent transcription. Phosphorylates 'Thr-18' of p53/TP53, histone H3, and may also phosphorylate MAPK8IP1. Phosphorylates BANF1 and disrupts its ability to bind DNA and reduces its binding to LEM domain-containing proteins. Down-regulates the transactivation of transcription induced by ERBB2, HRAS, BRAF, and MEK1. Blocks the phosphorylation of ERK in response to ERBB2 and HRAS. Can also phosphorylate the following substrates that are commonly used to establish in vitro kinase activity: casein, MBP and histone H2B, but it is not sure that this is physiologically relevant. Its function is as follows. Phosphorylates 'Thr-18' of p53/TP53, as well as histone H3. Reduces p53/TP53 ubiquitination by MDM2, promotes p53/TP53 acetylation by EP300 and thereby increases p53/TP53 stability and activity. This Homo sapiens (Human) protein is Serine/threonine-protein kinase VRK2 (VRK2).